A 321-amino-acid polypeptide reads, in one-letter code: NADH-ubiquinone oxidoreductase chain 1 (321 aa).

The next 8 helical transmembrane spans lie at 2-22 (LVML…VAFL), 71-91 (ALFI…WMFI), 104-124 (LLVI…SGWA), 148-168 (LGLI…QAFI), 173-193 (HTWF…STLA), 224-244 (LFFL…AIMF), 255-275 (ILPI…FLWI), and 295-315 (FLPL…SLGG).

It belongs to the complex I subunit 1 family.

It localises to the mitochondrion inner membrane. It catalyses the reaction a ubiquinone + NADH + 5 H(+)(in) = a ubiquinol + NAD(+) + 4 H(+)(out). Core subunit of the mitochondrial membrane respiratory chain NADH dehydrogenase (Complex I) that is believed to belong to the minimal assembly required for catalysis. Complex I functions in the transfer of electrons from NADH to the respiratory chain. The immediate electron acceptor for the enzyme is believed to be ubiquinone. This Lampetra fluviatilis (European river lamprey) protein is NADH-ubiquinone oxidoreductase chain 1 (MT-ND1).